The chain runs to 921 residues: Probable dipeptidyl-aminopeptidase B (921 aa).

2 disordered regions span residues 1–33 (MAGH…TAST) and 45–66 (VAAN…RGER). Residues 1–109 (MAGHPEENAQ…NKSVDKKLRR (109 aa)) are Cytoplasmic-facing. Over residues 10–22 (QLLSTEQESMSRN) the composition is skewed to polar residues. Residues 23–33 (SSDSVASTAST) are compositionally biased toward low complexity. Residues 110 to 130 (LIWIIGGVFIGAWVLALFIFL) traverse the membrane as a helical; Signal-anchor for type II membrane protein segment. The Vacuolar portion of the chain corresponds to 131–921 (GKQAYKHSSE…VPLEIDAAKV (791 aa)). Residues 138–157 (SSESPHDPQATSSRGSGKKV) are disordered. N-linked (GlcNAc...) asparagine glycosylation is present at N362. Residue S768 is the Charge relay system of the active site. N822 is a glycosylation site (N-linked (GlcNAc...) asparagine). Active-site charge relay system residues include D845 and H878.

Belongs to the peptidase S9B family.

It is found in the vacuole membrane. The enzyme catalyses Release of an N-terminal dipeptide, Xaa-Yaa-|-Zaa-, from a polypeptide, preferentially when Yaa is Pro, provided Zaa is neither Pro nor hydroxyproline.. In terms of biological role, type IV dipeptidyl-peptidase which removes N-terminal dipeptides sequentially from polypeptides having unsubstituted N-termini provided that the penultimate residue is proline. The polypeptide is Probable dipeptidyl-aminopeptidase B (dapB) (Botryotinia fuckeliana (strain B05.10) (Noble rot fungus)).